Here is a 369-residue protein sequence, read N- to C-terminus: Cytokine receptor common subunit gamma (369 aa).

Positions 1-22 are cleaved as a signal peptide; sequence MLKPSLPFTSLLFLQLPLLGVG. Residues 23 to 262 lie on the Extracellular side of the membrane; sequence LNTTILTPNG…ENPFLFALEA (240 aa). Residues Asn24, Asn71, Asn75, and Asn84 are each glycosylated (N-linked (GlcNAc...) asparagine). A disulfide bridge links Cys62 with Cys72. Cys102 and Cys115 form a disulfide bridge. Residues 156-253 enclose the Fibronectin type-III domain; it reads APENLTLHKL…IHWGSNTSKE (98 aa). An N-linked (GlcNAc...) asparagine glycan is attached at Asn159. Cysteines 182 and 231 form a disulfide. A WSXWS motif motif is present at residues 237–241; that stretch reads WSEWS. N-linked (GlcNAc...) asparagine glycosylation is present at Asn249. A helical transmembrane segment spans residues 263-283; it reads VVISVGSMGLIISLLCVYFWL. Residues 284-369 are Cytoplasmic-facing; it reads ERTMPRIPTL…PPCYTLKPET (86 aa). The Box 1 motif signature appears at 286–294; that stretch reads TMPRIPTLK. Phosphothreonine is present on Thr292.

It belongs to the type I cytokine receptor family. Type 5 subfamily. The gamma subunit is common to the IL2, IL4, IL7, IL15, IL21 and probably also the IL13 receptors. Interacts with SHB upon interleukin stimulation. Interacts with IL9. In terms of assembly, (Microbial infection) Interacts with HTLV-1 accessory protein p12I.

It is found in the cell membrane. The protein localises to the cell surface. Its function is as follows. Common subunit for the receptors for a variety of interleukins. Probably in association with IL15RA, involved in the stimulation of neutrophil phagocytosis by IL15. The polypeptide is Cytokine receptor common subunit gamma (IL2RG) (Homo sapiens (Human)).